The sequence spans 631 residues: tRNA 5-methylaminomethyl-2-thiouridine biosynthesis bifunctional protein MnmC (631 aa).

Positions 1-243 are tRNA (mnm(5)s(2)U34)-methyltransferase; the sequence is MITDLRPPAM…KREMLTGRLP (243 aa). The interval 261–631 is FAD-dependent cmnm(5)s(2)U34 oxidoreductase; it reads IGAGIAGAAL…GRLYRNQLTV (371 aa).

It in the N-terminal section; belongs to the methyltransferase superfamily. tRNA (mnm(5)s(2)U34)-methyltransferase family. In the C-terminal section; belongs to the DAO family. FAD serves as cofactor.

Its subcellular location is the cytoplasm. The enzyme catalyses 5-aminomethyl-2-thiouridine(34) in tRNA + S-adenosyl-L-methionine = 5-methylaminomethyl-2-thiouridine(34) in tRNA + S-adenosyl-L-homocysteine + H(+). Its function is as follows. Catalyzes the last two steps in the biosynthesis of 5-methylaminomethyl-2-thiouridine (mnm(5)s(2)U) at the wobble position (U34) in tRNA. Catalyzes the FAD-dependent demodification of cmnm(5)s(2)U34 to nm(5)s(2)U34, followed by the transfer of a methyl group from S-adenosyl-L-methionine to nm(5)s(2)U34, to form mnm(5)s(2)U34. In Marinobacter nauticus (strain ATCC 700491 / DSM 11845 / VT8) (Marinobacter aquaeolei), this protein is tRNA 5-methylaminomethyl-2-thiouridine biosynthesis bifunctional protein MnmC.